A 67-amino-acid chain; its full sequence is Conotoxin Cl14c (67 aa).

Residues 1–20 (MNVTVMFLVLLLLTMPLTDG) form the signal peptide. A propeptide spanning residues 21–48 (FNIRATNGGELFGPVQRDAGNVLDHGFQ) is cleaved from the precursor.

It belongs to the conotoxin L superfamily. Post-translationally, contains 2 disulfide bonds. In terms of tissue distribution, expressed by the venom duct.

It localises to the secreted. The sequence is that of Conotoxin Cl14c from Californiconus californicus (California cone).